The sequence spans 241 residues: Corrinoid adenosyltransferase MMAB (241 aa).

The transit peptide at 1–26 directs the protein to the mitochondrion; sequence MAVWGPGGRLGLRGCLGARKLLCPRF. The segment at 27–69 is disordered; the sequence is QSRGPQGVEDGDRPQPSSKTPKVPKIYTKTGDKGFSSTFTGER. Residues 54-63 and Lys72 each bind ATP; that span reads TKTGDKGFSS. Ser128 is subject to Phosphoserine. 184–188 provides a ligand contact to ATP; sequence RRAER. N6-succinyllysine is present on Lys205. Asn208 contributes to the ATP binding site. Residue Lys224 is modified to N6-acetyllysine; alternate. Lys224 bears the N6-succinyllysine; alternate mark.

Belongs to the Cob(I)alamin adenosyltransferase family. As to quaternary structure, homotrimer.

Its subcellular location is the mitochondrion. It carries out the reaction cob(I)alamin-[corrinoid adenosyltransferase] + ATP = apo-[corrinoid adenosyltransferase] + adenosylcob(III)alamin + triphosphate. In terms of biological role, converts cob(I)alamin to adenosylcobalamin (adenosylcob(III)alamin), a coenzyme for methylmalonyl-CoA mutase, therefore participates in the final step of the vitamin B12 conversion. Generates adenosylcobalamin (AdoCbl) and directly delivers the cofactor to MUT in a transfer that is stimulated by ATP-binding to MMAB and gated by MMAA. This is Corrinoid adenosyltransferase MMAB from Bos taurus (Bovine).